A 103-amino-acid polypeptide reads, in one-letter code: MNRGFSFSTKVATSLNRCNNRSNNISQSVSYNFINKPTTTTSSTTSASTTSQPSFSLPTSCNSNSPQSNLNSFRTKSQTISKFSSNLLGTALFEFQAFLIDDT.

Residues 38-51 (TTTTSSTTSASTTS) show a composition bias toward low complexity. A disordered region spans residues 38 to 70 (TTTTSSTTSASTTSQPSFSLPTSCNSNSPQSNL). Residues 52–70 (QPSFSLPTSCNSNSPQSNL) show a composition bias toward polar residues.

This is an uncharacterized protein from Dictyostelium discoideum (Social amoeba).